Reading from the N-terminus, the 34-residue chain is Photosystem II reaction center protein M (34 aa).

The helical transmembrane segment at 7–27 threads the bilayer; sequence GFVASLMFILVPAIFLIVLYI.

It belongs to the PsbM family. As to quaternary structure, PSII is composed of 1 copy each of membrane proteins PsbA, PsbB, PsbC, PsbD, PsbE, PsbF, PsbH, PsbI, PsbJ, PsbK, PsbL, PsbM, PsbT, PsbX, PsbY, PsbZ, Psb30/Ycf12, peripheral proteins PsbO, CyanoQ (PsbQ), PsbU, PsbV and a large number of cofactors. It forms dimeric complexes.

It localises to the cellular thylakoid membrane. Its function is as follows. One of the components of the core complex of photosystem II (PSII). PSII is a light-driven water:plastoquinone oxidoreductase that uses light energy to abstract electrons from H(2)O, generating O(2) and a proton gradient subsequently used for ATP formation. It consists of a core antenna complex that captures photons, and an electron transfer chain that converts photonic excitation into a charge separation. This subunit is found at the monomer-monomer interface. The polypeptide is Photosystem II reaction center protein M (Synechococcus sp. (strain CC9902)).